Consider the following 261-residue polypeptide: Thiamine thiazole synthase (261 aa).

Residues Ser40, Glu59–Arg60, Gly67, Val133, and His159–Asp161 contribute to the NAD(+) site. Fe cation contacts are provided by Asp161 and His176. 2 residues coordinate NAD(+): Ser179 and Met226. Arg236 is a binding site for glycine.

The protein belongs to the THI4 family. Homooctamer; tetramer of dimers. The cofactor is Fe(2+).

The catalysed reaction is hydrogen sulfide + glycine + NAD(+) = ADP-5-ethyl-4-methylthiazole-2-carboxylate + nicotinamide + 3 H2O + H(+). It participates in cofactor biosynthesis; thiamine diphosphate biosynthesis. Involved in the biosynthesis of the thiazole moiety of thiamine. Catalyzes the conversion of NAD and glycine to adenosine diphosphate 5-(2-hydroxyethyl)-4-methylthiazole-2-carboxylate (ADT), an adenylated thiazole intermediate, using free sulfide as a source of sulfur. The polypeptide is Thiamine thiazole synthase (Methanococcus vannielii (strain ATCC 35089 / DSM 1224 / JCM 13029 / OCM 148 / SB)).